Consider the following 231-residue polypeptide: Sensory transduction protein BceR (231 aa).

In terms of domain architecture, Response regulatory spans 3 to 116 (KLLLIEDDES…VLIAKIQAMF (114 aa)). D52 is subject to 4-aspartylphosphate. A DNA-binding region (ompR/PhoB-type) is located at residues 127–225 (STIKTWCGAA…KVGQGYIAKE (99 aa)).

Post-translationally, phosphorylated by BceS.

The protein localises to the cytoplasm. Functionally, member of the two-component regulatory system BceS/BceR involved in the regulation of bacitracin resistance. When activated by BceS, binds to the upstream region of the bceAB promoter and up-regulates the expression of these two genes. This chain is Sensory transduction protein BceR (bceR), found in Bacillus subtilis (strain 168).